The chain runs to 100 residues: RxLR effector protein PITG_18683 (100 aa).

Positions 1–22 (MRSFLYGILAFAVLARSSAVAA) are cleaved as a signal peptide. The RxLR-dEER motif lies at 43–57 (RSLRVEAQEVIQSGR). A Calmodulin-binding motif motif is present at residues 78–82 (KPDIK).

This sequence belongs to the RxLR effector family. In terms of assembly, interacts with the host calmodulin.

It localises to the secreted. Its subcellular location is the host cell. Its function is as follows. Secreted effector that associates with calmodulin to interfere with plant defense-associated calcium signaling in hosts. The chain is RxLR effector protein PITG_18683 from Phytophthora infestans (strain T30-4) (Potato late blight agent).